Consider the following 386-residue polypeptide: Protein lin-8 (386 aa).

Positions 175-285 (LGLEARRASK…FSQQYGGGGS (111 aa)) are sufficient for interaction with lin-35. Residues 212-240 (EEPYEETGSNWSDPAPEPSQSKSQSPEAK) are disordered. Residues 229-240 (PSQSKSQSPEAK) show a composition bias toward low complexity.

The protein belongs to the lin-8 family. As to quaternary structure, interacts with lin-35 (via C-terminus). As to expression, widely expressed throughout development, with particularly prominent expression in the germline and in neuronal nuclei of the head (at protein level).

Its subcellular location is the nucleus. Its function is as follows. Acts as a synthetic multivulva class A (synMuvA) protein and redundantly inhibits lin-3/EGF expression to prevent inappropriate vulva induction. The chain is Protein lin-8 from Caenorhabditis elegans.